Consider the following 351-residue polypeptide: DNA-directed RNA polymerase subunit alpha (351 aa).

Residues 1-236 are alpha N-terminal domain (alpha-NTD); sequence MSVNTKNWQE…DQLTLFVHFE (236 aa). Positions 256–351 are alpha C-terminal domain (alpha-CTD); sequence DDANQLNRYL…AKKLEQELLG (96 aa).

This sequence belongs to the RNA polymerase alpha chain family. In terms of assembly, homodimer. The RNAP catalytic core consists of 2 alpha, 1 beta, 1 beta' and 1 omega subunit. When a sigma factor is associated with the core the holoenzyme is formed, which can initiate transcription.

The enzyme catalyses RNA(n) + a ribonucleoside 5'-triphosphate = RNA(n+1) + diphosphate. Functionally, DNA-dependent RNA polymerase catalyzes the transcription of DNA into RNA using the four ribonucleoside triphosphates as substrates. This is DNA-directed RNA polymerase subunit alpha from Erythrobacter litoralis (strain HTCC2594).